A 975-amino-acid polypeptide reads, in one-letter code: Homeobox protein cut-like 1 (975 aa).

The CUT 1 DNA-binding region spans 1–73 (SRQVKEQLIK…ILALRSIQGR (73 aa)). Disordered regions lie at residues 90–113 (PKRRNGSEGNITTRIRASETGSDE) and 126–148 (LQVQKTAEPAQPSSTSSSGTSDD). Residues 113-169 (EAIKSILEQAKRELQVQKTAEPAQPSSTSSSGTSDDAIRSILQQARREMEAQQAALD) are a coiled coil. Serine 207 is subject to Phosphoserine. The segment at 209-246 (KKPPTAPDTSASTLPNPPALKKESQDAPGLDLPGAAES) is disordered. Residues lysine 229, lysine 255, and lysine 286 each participate in a glycyl lysine isopeptide (Lys-Gly) (interchain with G-Cter in SUMO2) cross-link. Basic and acidic residues predominate over residues 262-297 (GVWKDHWWSTVQPERKSAAPPEDAKSEEAGGTKEKG). The interval 262–369 (GVWKDHWWST…SKPAKPSVPP (108 aa)) is disordered. Polar residues predominate over residues 328 to 351 (RTPQSSELSLTGASRSETPQNSPL). Serine 349 carries the post-translational modification Phosphoserine. A DNA-binding region (CUT 2) is located at residues 374–461 (QYEIYMYQEV…QGVLPVQGQQ (88 aa)). Polar residues predominate over residues 476 to 489 (LQQGCVSSESTPKT). Residues 476 to 549 (LQQGCVSSES…SQPATPLPLS (74 aa)) form a disordered region. Low complexity predominate over residues 490-506 (SASCSPAPESPMSSSES). Phosphoserine is present on residues serine 499 and serine 509. Positions 557-644 (QELVAMSPEL…VEKLMDMKRM (88 aa)) form a DNA-binding region, CUT 3. The interval 652–687 (RRHSSVSDSQPCEPPSVGIDYSQGASPQPQHQLKKP) is disordered. The homeobox DNA-binding region spans 684 to 743 (LKKPRVVLAPEEKEALKRAYQQKPYPSPKTIEELATQLNLKTSTVINWFHNYRSRIRREL). A Phosphoserine modification is found at serine 710. A Glycyl lysine isopeptide (Lys-Gly) (interchain with G-Cter in SUMO2) cross-link involves residue lysine 724. The interval 752–949 (SQGQAGARHS…DSRDNPLRKK (198 aa)) is disordered. Residues 756–773 (AGARHSPSARSSGAAPSS) show a composition bias toward low complexity. Serine 777 is modified (phosphoserine). Over residues 780 to 813 (GVEAAEGPGAADAEESAPAAAAKSQGGPAEAAVA) the composition is skewed to low complexity. Positions 838 to 847 (PGRRGGGGPA) are enriched in gly residues. Low complexity predominate over residues 850–860 (APAAPAAAARG). Positions 861-890 (PSRRPGARAKPRRRRRRRRRHARGGGRRYL) are enriched in basic residues. Residues 907 to 929 (RSSALPSTSAPAAARRPSSLQSL) are compositionally biased toward low complexity. At serine 925 the chain carries Phosphoserine. Positions 937–946 (GARDSRDNPL) are enriched in basic and acidic residues. Phosphoserine is present on residues serine 956 and serine 966.

It belongs to the CUT homeobox family. As to quaternary structure, interacts with BANP. Post-translationally, as cells progress into S phase, a fraction of CUX1 molecules is proteolytically processed into N-terminally truncated proteins of 110 kDa by CTSL. Cell cycle-dependent processing of CUX1 serves to generate a CDP/Cux p110 with distinct DNA binding and transcriptional properties. In terms of processing, phosphorylated by PKA. As to expression, a broad pattern of expression observed in tissues of diverse origins, such as cartilage, liver, brain, lung, heart and skeletal muscle. There are 2 distinct protein species: the larger one (230-250 kDa) is found mainly in adult brain, lung and heart, and the smaller one (180-190 kDa) predominates in early embryonic tissues.

It localises to the nucleus. Transcription factor involved in the control of neuronal differentiation in the brain. Regulates dendrite development and branching, and dendritic spine formation in cortical layers II-III. Also involved in the control of synaptogenesis. In addition, it has probably a broad role in mammalian development as a repressor of developmentally regulated gene expression. May act by preventing binding of positively-activing CCAAT factors to promoters. Component of nf-munr repressor; binds to the matrix attachment regions (MARs) (5' and 3') of the immunoglobulin heavy chain enhancer. Represses T-cell receptor (TCR) beta enhancer function by binding to MARbeta, an ATC-rich DNA sequence located upstream of the TCR beta enhancer. Binds to the TH enhancer; may require the basic helix-loop-helix protein TCF4 as a coactivator. Functionally, plays a role in cell cycle progression, in particular at the G1/S transition. As cells progress into S phase, a fraction of CUX1 molecules is proteolytically processed into N-terminally truncated proteins of 110 kDa. While CUX1 only transiently binds to DNA and carries the CCAAT-displacement activity, CDP/Cux p110 makes a stable interaction with DNA and stimulates expression of genes such as POLA1. This chain is Homeobox protein cut-like 1 (CUX1), found in Canis lupus familiaris (Dog).